Reading from the N-terminus, the 250-residue chain is uncharacterized protein (250 aa).

The next 7 helical transmembrane spans lie at valine 36–valine 56, proline 73–methionine 93, alanine 101–leucine 121, valine 128–threonine 148, phenylalanine 156–phenylalanine 176, proline 180–tyrosine 200, and phenylalanine 225–phenylalanine 245.

This sequence belongs to the BI1 family.

The protein resides in the cell membrane. This is an uncharacterized protein from Caulobacter vibrioides (strain ATCC 19089 / CIP 103742 / CB 15) (Caulobacter crescentus).